We begin with the raw amino-acid sequence, 419 residues long: MGHYFMLNLLKKLPFYEKTWFQFILFVLRRFEADRCREHAGALTYTTLFAVVPMLTVFLVIISSIKALEPARQQLQQLIYSNFLPKSTIAFDRVLNSFTEKSSNLTVIGILFLFVTTVMMLSTIETAFNRIWRVKETRSGIIGFMRYWTIISLGPIILGSAFVISSTVASMNILSNNFAGYELSGAFILWLISFGLTILGFFILYWTIPNRTVPMYAAIIAACFSAAIFELLKNIFGFAMSNFTSYELVYGAFAAIPIFLLWIFLSWNIVLLGVEVSYALTAFHSDKIQTRHPVLMLLDVLELFYKKQKLGQSVTDLEALDIMGRGEIGRWPSYIELLEKQNLIKRTDKDEYVLVRNLSQVDFWTFFTALPYPLPLRKDVGNIHPDDEWMQKIGPALIEADDYLAAKLSIPLSTLFEAK.

Transmembrane regions (helical) follow at residues 42 to 62 (ALTY…LVII), 105 to 125 (LTVI…STIE), 148 to 168 (WTII…SSTV), 186 to 206 (AFIL…ILYW), 212 to 232 (TVPM…FELL), and 252 to 272 (AFAA…IVLL).

It belongs to the UPF0761 family.

It localises to the cell inner membrane. In Acinetobacter baylyi (strain ATCC 33305 / BD413 / ADP1), this protein is UPF0761 membrane protein ACIAD3168.